The chain runs to 636 residues: ABC transporter ATP-binding protein RamA (636 aa).

5 helical membrane passes run 45 to 65, 78 to 98, 175 to 195, 269 to 289, and 297 to 317; these read VLVL…PLAL, AGWW…LDSA, LVDV…ALLL, GVLV…RLAA, and LLAV…ASLL. The region spanning 45–322 is the ABC transmembrane type-1 domain; that stretch reads VLVLLCSVAA…AASLLGAIVR (278 aa). Positions 354–585 constitute an ABC transporter domain; sequence LRLCGVRVLR…AGYREVFGAG (232 aa). ATP is bound at residue 386-393; the sequence is GRSGAGKS. Residues 589 to 606 show a composition bias toward gly residues; sequence GAGAGAGAGADAGAGADA. The interval 589–636 is disordered; the sequence is GAGAGAGAGADAGAGADAGPGPDSGAATAVGGSGPGPVRRPEPEEARP. Low complexity predominate over residues 607–618; sequence GPGPDSGAATAV. The span at 627–636 shows a compositional bias: basic and acidic residues; it reads RRPEPEEARP.

Belongs to the ABC transporter superfamily.

Its subcellular location is the cell membrane. Its function is as follows. Probably involved in exporting SapB from the cell. Expression of the ram locus (ramA, ramB and ramR) induces rapid aerial mycelium formation in S.lividans. The protein is ABC transporter ATP-binding protein RamA of Streptomyces coelicolor (strain ATCC BAA-471 / A3(2) / M145).